Consider the following 1680-residue polypeptide: Sodium channel protein type 7 subunit alpha (1680 aa).

Over 1–117 (MLTSPEPKGL…RRAVIKVLVH (117 aa)) the chain is Cytoplasmic. An I repeat occupies 100–401 (TLSPLSSLRR…ILTMAYEQEK (302 aa)). A helical membrane pass occupies residues 118–137 (PLFRLLILISVLTDSILMCM). The Extracellular portion of the chain corresponds to 138-141 (SNLP). Residues 142–167 (EWILAVENTLLGIYTFEILVKVIARG) form a helical membrane-spanning segment. Residues 168–178 (IWAGSFSFLGD) lie on the Cytoplasmic side of the membrane. The chain crosses the membrane as a helical span at residues 179-196 (LWNWLDFSVTLFELITRS). At 197 to 200 (SPLS) the chain is on the extracellular side. A helical membrane pass occupies residues 201–219 (SLPMFKTIRTLRILKIIPL). The Cytoplasmic portion of the chain corresponds to 220–237 (NHGLQSIVVTLVQCLKKL). A helical membrane pass occupies residues 238 to 259 (LGAIALALFFLTVSSLFGMGLF). Residues 260–338 (MGNLKHKCVR…PDNGFTSFDN (79 aa)) lie on the Extracellular side of the membrane. C267 and C307 are oxidised to a cystine. 2 N-linked (GlcNAc...) asparagine glycosylation sites follow: N281 and N309. Positions 339–366 (FGWALLAMFRLMTQDYPELLYHQILYAS) form an intramembrane region, pore-forming. Residue G367 is a topological domain, extracellular. A helical transmembrane segment spans residues 368–407 (KIYMIFFVLISFWFAFYMASLFLGILTMAYEQEKQRASEE). Residues 408–505 (SRDMDSKCHQ…EFADRIITHP (98 aa)) lie on the Cytoplasmic side of the membrane. An II repeat occupies 487–756 (CSPCWIKLNE…QLAVAWIKMV (270 aa)). The chain crosses the membrane as a helical span at residues 506 to 521 (LFDLFLVICIILNICF). Residues 522–530 (LALEHFPMS) lie on the Extracellular side of the membrane. The chain crosses the membrane as a helical span at residues 531–559 (EELMSLLAIGNLVFIGIYTIEMILKIIAM). Residues 560–568 (HPYGYFQIS) are Cytoplasmic-facing. The chain crosses the membrane as a helical span at residues 569–586 (WHIFDSILVVLGLTEMLL). Residues 587-592 (ADIEEI) are Extracellular-facing. Residues 593–608 (TVFILVPLIFIKLGKY) form a helical membrane-spanning segment. Over 609-625 (APPFKNLMRILGRALVA) the chain is Cytoplasmic. The helical transmembrane segment at 626–654 (LKDLVLLVSIFIYFSAVFGMKLFGRSYKD) threads the bilayer. Over 655–672 (CVCHVDQDCQRQRWHMSD) the chain is Extracellular. Disulfide bonds link C657-C663 and C695-C704. Positions 673–699 (FLHAYVTVFRILCGEWIETLWECMEVA) form an intramembrane region, pore-forming. A topological domain (extracellular) is located at residue G700. The helical transmembrane segment at 701–731 (EAWCIPFYMMVILIGNLLILYLFVALVSSFA) threads the bilayer. Residues 732 to 933 (SYDATTEVSK…KTCCKIVENS (202 aa)) are Cytoplasmic-facing. The segment covering 807–833 (DQSSGTEKTPVTESESQSLIASPSVSE) has biased composition (polar residues). Residues 807–874 (DQSSGTEKTP…MKQSSSSECS (68 aa)) are disordered. S842 carries the post-translational modification Phosphoserine. An III repeat occupies 915–1223 (NGKIWRNIRK…KKQYRALKKL (309 aa)). A helical transmembrane segment spans residues 934 to 952 (WFECFIGLVTLLCTGTLAL). At 953-960 (EDIYIDQR) the chain is on the extracellular side. Residues 961–989 (KTIKIFLEYGDMIFAYIFILEMLLKWVAY) traverse the membrane as a helical segment. Topologically, residues 990–997 (GFKAYFSN) are cytoplasmic. The helical transmembrane segment at 998 to 1019 (NWYKLDFMVVIVLCLSLIGKTR) threads the bilayer. A topological domain (extracellular) is located at residue E1020. A helical membrane pass occupies residues 1021–1039 (DLNPLASIKFLRALRVLSQ). Residues 1040-1054 (FERMKVVLRALIKTT) lie on the Cytoplasmic side of the membrane. A helical membrane pass occupies residues 1055–1079 (LPAVSVFLVCLMIWLLFSVMGVFLF). Residues 1080–1126 (AGKFYECIDPTRGERFSVFEVMNKSQCENLVFNESMPWENAKLNFDN) are Extracellular-facing. C1086 and C1106 are joined by a disulfide. 2 N-linked (GlcNAc...) asparagine glycosylation sites follow: N1102 and N1112. The segment at residues 1127 to 1153 (VGNGFLSLFQVATFNGWISIMNSAIDS) is an intramembrane region (pore-forming). At 1154–1166 (VGVYMQPSFEHSL) the chain is on the extracellular side. The chain crosses the membrane as a helical span at residues 1167–1201 (HMYTYFIIFVVFGLFLPLCMLIGVIIRNFNKQKIK). Topologically, residues 1202-1249 (QGGSNIFITVKQKKQYRALKKLLYADSQKPAARPRNKFQGFICDVVTH) are cytoplasmic. The IV repeat unit spans residues 1232–1530 (AARPRNKFQG…WNRFDPDRTQ (299 aa)). The helical transmembrane segment at 1250-1271 (RVFNVIIILLICFQATTIMIQN) threads the bilayer. The Extracellular portion of the chain corresponds to 1272-1275 (DEQS). Residues 1276-1304 (PQIETAVFWMNSLFTMLFTLECILKLTAF) traverse the membrane as a helical segment. Residues 1305-1311 (RCHYFTS) are Cytoplasmic-facing. Residues 1312 to 1337 (AWNVHDFMVVVFSITGLLLPLSIGQY) traverse the membrane as a helical segment. At 1338-1340 (FVP) the chain is on the extracellular side. A helical transmembrane segment spans residues 1341–1361 (PSLVQLLLLSRIIHVLRPGKG). The Cytoplasmic portion of the chain corresponds to 1362 to 1376 (PKVFHDLMLPLMLSL). A helical transmembrane segment spans residues 1377–1401 (PALLNIALLIFLVMFIYAIFGMYNF). The Extracellular segment spans residues 1402-1419 (AYVKKEAGINDVSNFETF). The segment at residues 1420–1443 (GSSMLCLFQVTTFSGWDGMLDAIF) is an intramembrane region (pore-forming). Residues 1444–1467 (NSQWSDCDPDKINPGTQVRGDCGS) are Extracellular-facing. C1450 and C1465 form a disulfide bridge. The helical transmembrane segment at 1468–1503 (PSVGIFYFVSYILISWLIIVNMYVVLIMEFLSIPSK) threads the bilayer. The Cytoplasmic segment spans residues 1504 to 1680 (RKNRTLSEDD…EEKASIQTQI (177 aa)). A disordered region spans residues 1646–1680 (KIQDIPEIDDGREDPNSKGVHSGQIEEKASIQTQI).

Belongs to the sodium channel (TC 1.A.1.10) family. SCN7A subfamily. The sodium channel formed by SCN7A is probably a heterooligomeric complex consisting of the ion conducting pore forming alpha subunit SCN7A and regulatory beta subunits such as SCN3B. Interacts with ATP1A1; activates ATP1A1 and thereby indirectly signals to nearby neurons to regulate sodium homeostasis. Not tissue specific but widely expressed.

It is found in the cell membrane. The enzyme catalyses Na(+)(in) = Na(+)(out). Sodium leak channel functioning as an osmosensor regulating sodium ion levels in various tissues and organs. While most sodium channels are voltage-gated, SCN7A is not and lets sodium flow through membrane along its concentration gradient. In glial cells of the central nervous system, senses body-fluid sodium levels and controls salt intake behavior as well as voluntary water intake through activation of nearby neurons to maintain appropriate sodium levels in the body. By mediating sodium influx into keratinocytes, also plays a role in skin barrier homeostasis. This Rattus norvegicus (Rat) protein is Sodium channel protein type 7 subunit alpha.